The following is a 260-amino-acid chain: Putative ABC transporter ATP-binding protein (260 aa).

An ABC transporter domain is found at 4 to 243; sequence ISMKNVTLKK…QVLENFYESP (240 aa). 36–43 contacts ATP; it reads GLNGSGKT.

It belongs to the ABC transporter superfamily.

This chain is Putative ABC transporter ATP-binding protein (abcX), found in Streptococcus mutans serotype c (strain ATCC 700610 / UA159).